Reading from the N-terminus, the 383-residue chain is Lipoyl synthase, mitochondrial (383 aa).

A mitochondrion-targeting transit peptide spans 1–19 (MHASTLTRCMRVAQNARCL). The tract at residues 69–97 (DAAPGTKPSRKPNASNRKPKWLKAQPTQG) is disordered. C116, C121, C127, C147, C151, C154, and S362 together coordinate [4Fe-4S] cluster. One can recognise a Radical SAM core domain in the interval 132 to 351 (KDGIATATIM…QKVAEQMGFL (220 aa)).

This sequence belongs to the radical SAM superfamily. Lipoyl synthase family. The cofactor is [4Fe-4S] cluster.

It localises to the mitochondrion. It carries out the reaction [[Fe-S] cluster scaffold protein carrying a second [4Fe-4S](2+) cluster] + N(6)-octanoyl-L-lysyl-[protein] + 2 oxidized [2Fe-2S]-[ferredoxin] + 2 S-adenosyl-L-methionine + 4 H(+) = [[Fe-S] cluster scaffold protein] + N(6)-[(R)-dihydrolipoyl]-L-lysyl-[protein] + 4 Fe(3+) + 2 hydrogen sulfide + 2 5'-deoxyadenosine + 2 L-methionine + 2 reduced [2Fe-2S]-[ferredoxin]. Its pathway is protein modification; protein lipoylation via endogenous pathway; protein N(6)-(lipoyl)lysine from octanoyl-[acyl-carrier-protein]: step 2/2. In terms of biological role, catalyzes the radical-mediated insertion of two sulfur atoms into the C-6 and C-8 positions of the octanoyl moiety bound to the lipoyl domains of lipoate-dependent enzymes, thereby converting the octanoylated domains into lipoylated derivatives. The sequence is that of Lipoyl synthase, mitochondrial from Phytophthora infestans (strain T30-4) (Potato late blight agent).